Reading from the N-terminus, the 962-residue chain is MISTRVMDIKLREAAEGLGEDSTGKKKSKFKTFKKFFGKKKRKESPSSTGSSTWKQSQTRNEVIAIESGPVGYDSEDELEESRGTLGSRALSHDSIFIPESGQDATRPVRVFSQENVCDRIKALQLKIQCNVKMGPPPPPGGLPAKRGEDAGMSSEDDGLPRSPPEMSLLHDVGPGTTIKVSVVSPDHVSDSTVSARISDNSLAPVADFSYPAESSSCLDNSAAKHKLQVKPRNQRSSKMRRLSSRAQSESLSDLTCTPEEEENEEKPLLEVSPEERPSSGQQDVAPDRGPEPGPPAPLPPPGGARARRARLQHSSALTASVEEGGVPGEDPSSRPATPELAEPESAPTLRVEPPSPPEGPPNPGPDGGKQDGEAPPAGPCAPATDKAEEVVCAPEDVASPFPTAIPEGDTTPPETDPAATSEAPSARDGPERSVPKEAEPTPPVLPDEEKGPPGPAPEPEREAETEPERGAGTEPERIGTEPSTAPAPSPPAPKSCLKHRPAAASEGPAASPPLAAAESPPVEPGPGSLDAEAAAPERPKAERAEAPPAGAERAAPERKAERGGAELRGAKKFSVSSCRARPRPGVSRPLERASGRLPLARSGPVWRSEAALDDLQGLPEPQHAKPGPRKLAERGPQDSGDRAASPAGPRKSPQEAAAAPGTREPCPAAQEPAPSEDRNPFPVKLRSTSLSLKYRDGASQEVKGVKRYSAEVRLERSLTVLPKEEKCPLGTAPALRGTRAPSDQGKGKARPPEPLSSKPPLPRKPLLQSFTLPHQPAPPDAGPGEREPRKEPRTAEKRPLRRGAEKSLPPAATGPGADGQPAPPWITVTRQKRRGTLDQPPNQEDKPGARTLKSEPGKQAKVPERGQEPVKQADFVRSKSFLITPVKPAVDRKQGAKLNFKEGLQRGISLSHQNLAQSAVMMEKELHQLKRASYASTDQPSWMELARKKSQAWSDMPQIIK.

Disordered stretches follow at residues 38 to 102, 131 to 174, and 212 to 871; these read GKKK…PESG, NVKM…HDVG, and PAES…QEPV. Polar residues predominate over residues 46–61; it reads PSSTGSSTWKQSQTRN. Position 92 is a phosphoserine (S92). Over residues 224 to 244 the composition is skewed to basic residues; the sequence is AKHKLQVKPRNQRSSKMRRLS. Residues 245–256 show a composition bias toward polar residues; that stretch reads SRAQSESLSDLT. Over residues 266–278 the composition is skewed to basic and acidic residues; sequence EKPLLEVSPEERP. Composition is skewed to pro residues over residues 292-303 and 354-365; these read EPGPPAPLPPPG and PPSPPEGPPNPG. The segment covering 407 to 425 has biased composition (low complexity); it reads PEGDTTPPETDPAATSEAP. Composition is skewed to basic and acidic residues over residues 429–440 and 459–480; these read DGPERSVPKEAE and EPER…ERIG. The residue at position 490 (S490) is a Phosphoserine. Over residues 503–521 the composition is skewed to low complexity; that stretch reads AAASEGPAASPPLAAAESP. 4 stretches are compositionally biased toward basic and acidic residues: residues 536-546, 555-570, 631-642, and 709-728; these read APERPKAERAE, AAPE…ELRG, KLAERGPQDSGD, and YSAE…EEKC. A compositionally biased stretch (pro residues) spans 753 to 764; the sequence is PEPLSSKPPLPR. Composition is skewed to basic and acidic residues over residues 784 to 806 and 844 to 869; these read PGER…RGAE and QEDK…RGQE.

The chain is CRACD-like protein from Homo sapiens (Human).